The chain runs to 205 residues: Phosphoribosyl-dephospho-CoA transferase (205 aa).

Catalysis depends on residues Asp-134 and Asp-136.

This sequence belongs to the MdcG family.

The catalysed reaction is apo-[malonate decarboxylase ACP] + 2'-(5''-triphospho-alpha-D-ribosyl)-3'-dephospho-CoA = holo-[malonate decarboxylase ACP] + diphosphate. Its function is as follows. Transfers 2'-(5-triphosphoribosyl)-3'-dephosphocoenzyme-A to the apo-[acyl-carrier-protein] of the malonate decarboxylase to yield holo-[acyl-carrier-protein]. The protein is Phosphoribosyl-dephospho-CoA transferase (mdcG) of Klebsiella pneumoniae.